Consider the following 433-residue polypeptide: C2H2 type master regulator of conidiophore development brlA (433 aa).

2 disordered regions span residues 23-64 (PSEC…SHYH) and 240-265 (KTHT…PVSR). The segment covering 30–48 (TSSFSPLDSPTPTPTSLYS) has biased composition (low complexity). Positions 240 to 264 (KTHTPSTPHRSVSMGTPSGSDTPVS) are enriched in polar residues. 2 consecutive C2H2-type zinc fingers follow at residues 321–345 (FKCK…MKSH) and 351–376 (HVCW…TKTH). The disordered stretch occupies residues 391 to 416 (ETSQDFDPDFRGQLTPDGRPIYGSKL).

Its subcellular location is the nucleus. BrlA, abaA and wetA are pivotal regulators of conidiophore development and conidium maturation. They act individually and together to regulate their own expression and that of numerous other sporulation-specific genes. Binds promoters of target genes at brlA response elements (BREs) containing the conserved sequence 5'-(C/A)(A/G)AGGG(G/A)-3'. Is not required for penicillin V production. The polypeptide is C2H2 type master regulator of conidiophore development brlA (Penicillium rubens (strain ATCC 28089 / DSM 1075 / NRRL 1951 / Wisconsin 54-1255) (Penicillium chrysogenum)).